The chain runs to 295 residues: Ethanolamine ammonia-lyase small subunit (295 aa).

Adenosylcob(III)alamin contacts are provided by V209 and E230.

Belongs to the EutC family. As to quaternary structure, the basic unit is a heterodimer which dimerizes to form tetramers. The heterotetramers trimerize; 6 large subunits form a core ring with 6 small subunits projecting outwards. The cofactor is adenosylcob(III)alamin.

It localises to the bacterial microcompartment. It catalyses the reaction ethanolamine = acetaldehyde + NH4(+). Its pathway is amine and polyamine degradation; ethanolamine degradation. Catalyzes the deamination of various vicinal amino-alcohols to oxo compounds. Allows this organism to utilize ethanolamine as the sole source of nitrogen and carbon in the presence of external vitamin B12. The polypeptide is Ethanolamine ammonia-lyase small subunit (Clostridium perfringens (strain ATCC 13124 / DSM 756 / JCM 1290 / NCIMB 6125 / NCTC 8237 / Type A)).